Here is a 193-residue protein sequence, read N- to C-terminus: Putative nitroreductase HBN1 (193 aa).

Ser2 is subject to N-acetylserine.

Belongs to the nitroreductase family. The cofactor is FMN.

The protein localises to the cytoplasm. The protein resides in the nucleus. This chain is Putative nitroreductase HBN1 (HBN1), found in Saccharomyces cerevisiae (strain ATCC 204508 / S288c) (Baker's yeast).